A 314-amino-acid chain; its full sequence is Ribosomal RNA small subunit methyltransferase H (314 aa).

S-adenosyl-L-methionine-binding positions include 35 to 37 (GGH), D55, F79, D101, and Q108.

This sequence belongs to the methyltransferase superfamily. RsmH family.

The protein localises to the cytoplasm. The catalysed reaction is cytidine(1402) in 16S rRNA + S-adenosyl-L-methionine = N(4)-methylcytidine(1402) in 16S rRNA + S-adenosyl-L-homocysteine + H(+). Its function is as follows. Specifically methylates the N4 position of cytidine in position 1402 (C1402) of 16S rRNA. The sequence is that of Ribosomal RNA small subunit methyltransferase H from Pectobacterium carotovorum subsp. carotovorum (strain PC1).